A 550-amino-acid polypeptide reads, in one-letter code: Neuronal acetylcholine receptor subunit alpha-9-II (550 aa).

The N-terminal stretch at 1–20 (MRKMVPVVCFATMLLQVAHS) is a signal peptide. The Extracellular segment spans residues 21–233 (AQGRYAQQLL…YTVLLQRRSS (213 aa)). Asn52 is a glycosylation site (N-linked (GlcNAc...) asparagine). A disulfide bond links Cys150 and Cys164. Asn165 carries an N-linked (GlcNAc...) asparagine glycan. Cysteines 214 and 215 form a disulfide. A run of 3 helical transmembrane segments spans residues 234 to 254 (FYIF…PLGF), 264 to 284 (VSLG…VAES), and 298 to 318 (YIAT…IMNI). Residues 319-528 (HFCGAEAKPV…WKRVAKVMDR (210 aa)) lie on the Cytoplasmic side of the membrane. Positions 357–439 (TSSSSSSSSS…HLSSSKYEGF (83 aa)) are disordered. Residues 358 to 367 (SSSSSSSSSS) are compositionally biased toward low complexity. Residues 413-422 (RHPKPRHQHH) are compositionally biased toward basic residues. Residues 529–549 (FFMWIFFIMVFLMSILIIGKA) form a helical membrane-spanning segment.

The protein belongs to the ligand-gated ion channel (TC 1.A.9) family. Acetylcholine receptor (TC 1.A.9.1) subfamily. As to expression, expressed in the brain, liver, olfactory mucosa, pituitary gland and hair cells of the saccule.

The protein resides in the postsynaptic cell membrane. It is found in the cell membrane. The polypeptide is Neuronal acetylcholine receptor subunit alpha-9-II (Oncorhynchus mykiss (Rainbow trout)).